A 313-amino-acid polypeptide reads, in one-letter code: Porphobilinogen deaminase (313 aa).

An S-(dipyrrolylmethanemethyl)cysteine modification is found at Cys241.

This sequence belongs to the HMBS family. In terms of assembly, monomer. It depends on dipyrromethane as a cofactor.

It catalyses the reaction 4 porphobilinogen + H2O = hydroxymethylbilane + 4 NH4(+). It participates in porphyrin-containing compound metabolism; protoporphyrin-IX biosynthesis; coproporphyrinogen-III from 5-aminolevulinate: step 2/4. It functions in the pathway porphyrin-containing compound metabolism; chlorophyll biosynthesis. Functionally, tetrapolymerization of the monopyrrole PBG into the hydroxymethylbilane pre-uroporphyrinogen in several discrete steps. The protein is Porphobilinogen deaminase of Chlorobium phaeovibrioides (strain DSM 265 / 1930) (Prosthecochloris vibrioformis (strain DSM 265)).